A 299-amino-acid polypeptide reads, in one-letter code: Bifunctional protein FolD (299 aa).

NADP(+)-binding positions include 166–168, Ser191, and Ile232; that span reads GRS.

The protein belongs to the tetrahydrofolate dehydrogenase/cyclohydrolase family. Homodimer.

The enzyme catalyses (6R)-5,10-methylene-5,6,7,8-tetrahydrofolate + NADP(+) = (6R)-5,10-methenyltetrahydrofolate + NADPH. It catalyses the reaction (6R)-5,10-methenyltetrahydrofolate + H2O = (6R)-10-formyltetrahydrofolate + H(+). It participates in one-carbon metabolism; tetrahydrofolate interconversion. Its function is as follows. Catalyzes the oxidation of 5,10-methylenetetrahydrofolate to 5,10-methenyltetrahydrofolate and then the hydrolysis of 5,10-methenyltetrahydrofolate to 10-formyltetrahydrofolate. The sequence is that of Bifunctional protein FolD from Anaplasma marginale (strain St. Maries).